The chain runs to 491 residues: Delayed-rectifier potassium channel regulatory subunit KCNS3 (491 aa).

The Cytoplasmic segment spans residues 1 to 182 (MVFGEFFHRP…IRMENPAYCL (182 aa)). A helical membrane pass occupies residues 183–204 (SAKLIAISSLSVVLASIVAMCV). Topologically, residues 205–220 (HSMSEFQNEDGEVDDP) are extracellular. Residues 221–243 (VLEGVEIACIAWFTGELAVRLAA) traverse the membrane as a helical segment. Residues 244 to 254 (APCQKKFWKNP) lie on the Cytoplasmic side of the membrane. The helical transmembrane segment at 255–275 (LNIIDFVSIIPFYATLAVDTK) threads the bilayer. At 276–285 (EEESEDIENM) the chain is on the extracellular side. Residues 286-306 (GKVVQILRLMRIFRILKLARH) form a helical; Voltage-sensor membrane-spanning segment. The Cytoplasmic segment spans residues 307–321 (SVGLRSLGATLRHSY). The chain crosses the membrane as a helical span at residues 322 to 343 (HEVGLLLLFLSVGISIFSVLIY). Residues 344–357 (SVEKDDHTSSLTSI) lie on the Extracellular side of the membrane. An intramembrane region (helical) is located at residues 358–369 (PICWWWATISMT). Residues 370 to 375 (TVGYGD) carry the Selectivity filter motif. Residues 370–377 (TVGYGDTH) lie within the membrane without spanning it. The Extracellular segment spans residues 378 to 384 (PVTLAGK). Residues 385–413 (LIASTCIICGILVVALPITIIFNKFSKYY) form a helical membrane-spanning segment. Over 414–491 (QKQKDIDVDQ…TTSLENCTAK (78 aa)) the chain is Cytoplasmic.

The protein belongs to the potassium channel family. S (TC 1.A.1.2) subfamily. Kv9.3/KCNS3 sub-subfamily. As to quaternary structure, heterotetramer with KCNB1. Does not form homomultimers. As to expression, detected in whole normal term placental and placental chorionic plate arteries and veins. Detected in syncytiotrophoblast and in blood vessel endothelium within intermediate villi and chorionic plate (at protein level). Detected in most tissues, but not in peripheral blood lymphocytes. The highest levels of expression are in lung.

Its subcellular location is the cell membrane. Potassium channel regulatory subunit that modulates the delayed rectifier potassium channel activity of KCNB1 by namely slowing down the deactivation and inactivation time constants. While it does not form functional channel on its own, it can form functional heterotetrameric channels with KCNB1. This Homo sapiens (Human) protein is Delayed-rectifier potassium channel regulatory subunit KCNS3.